The chain runs to 578 residues: 65-kDa microtubule-associated protein 2 (578 aa).

Coiled coils occupy residues 64–84, 151–184, 235–257, 290–312, and 461–489; these read AELL…TTAL, DETD…VLEF, TLKE…LTDL, ALAL…LKSS, and AMLD…QQEQ. Over residues 473-494 the composition is skewed to basic and acidic residues; the sequence is REDEKRRLKEQKKQQEQPHTDQ. The tract at residues 473 to 578 is disordered; the sequence is REDEKRRLKE…SRADPVMASP (106 aa). Phosphoserine occurs at positions 503 and 532. Positions 549–558 are enriched in polar residues; that stretch reads KIASPSNIVA. A phosphoserine mark is found at Ser566, Ser569, and Ser577.

Belongs to the MAP65/ASE1 family. In terms of assembly, forms a dimer. Binds to microtubules (MT). Bundles polymerized MT via the formation of 25-nm crossbridges with centrally located endocytic MT.

The protein localises to the nucleus. It is found in the cytoplasm. The protein resides in the cytoskeleton. It localises to the spindle pole. Its subcellular location is the phragmoplast. Microtubule-associated protein that stabilize microtubules (MT). Involved in the regulation of MT organization and dynamics. Confers MT resistance to the drug propyzamide and cold conditions. The protein is 65-kDa microtubule-associated protein 2 (MAP65-2) of Arabidopsis thaliana (Mouse-ear cress).